Consider the following 204-residue polypeptide: CASP-like protein 1B2 (204 aa).

Topologically, residues 1–28 (MASKGEEKPELVGSKQGIVSVTKAKHDQ) are cytoplasmic. Residues 29 to 49 (IVLVLRVVAFLATASATIVMG) form a helical membrane-spanning segment. Residues 50 to 80 (LNQETKTLLVGTIGTTPIRATLKAKFQHTPA) are Extracellular-facing. Residues 81 to 101 (FVFFVVANGLASVYNLVMLGV) traverse the membrane as a helical segment. Residues 102–114 (DVFGRKLDCKGLR) lie on the Cytoplasmic side of the membrane. Residues 115–135 (LVIISILDMVIVAVVAAGASS) form a helical membrane-spanning segment. The Extracellular portion of the chain corresponds to 136 to 168 (AAFMAELGKNGNSHAKWNKICDKFESFCHQGGG). The helical transmembrane segment at 169-189 (ALIPSFIALLLLFLISAISII) threads the bilayer. At 190–204 (TLHNQKLTSPHATTP) the chain is on the cytoplasmic side.

Belongs to the Casparian strip membrane proteins (CASP) family. In terms of assembly, homodimer and heterodimers.

The protein localises to the cell membrane. This is CASP-like protein 1B2 from Vitis vinifera (Grape).